We begin with the raw amino-acid sequence, 298 residues long: TLR adapter interacting with SLC15A4 on the lysosome (298 aa).

A pLxIS motif motif is present at residues 287–291 (SLHIS). S291 carries the phosphoserine modification.

Interacts (via pLxIS motif) with IRF5; leading to IRF5 activation. Interacts with SLC15A4; leading to its recruitment to endolysosome. In terms of processing, the phosphorylated pLxIS motif constitutes an IRF5-binding motif, leading to recruitment of the transcription factor IRF5 to induce type-I interferons and other cytokines.

The protein resides in the lysosome membrane. Its subcellular location is the endosome membrane. The protein localises to the nucleus. It is found in the cytoplasm. Its function is as follows. Innate immune adapter that mediates the recruitment and activation of IRF5 downstream of endolysosomal toll-like receptors TLR7, TLR8 and TLR9. Following recruitment to endolysosome by SLC15A4 downstream of TLR7, TLR8 and TLR9, specifically recruits IRF5 transcription factor via its pLxIS motif, leading to IRF5 activation and subsequent expression of type I interferons. Plays a role in the regulation of endolysosomal pH in immune cells such as B-cells, dendritic cells and monocytes. This is TLR adapter interacting with SLC15A4 on the lysosome from Mus musculus (Mouse).